The chain runs to 86 residues: Stage V sporulation protein S (86 aa).

Interferes with sporulation at an early stage. Seems to play a positive role in allowing cells to progress beyond stage V of sporulation. The polypeptide is Stage V sporulation protein S (Bacillus subtilis (strain 168)).